An 89-amino-acid polypeptide reads, in one-letter code: Acylphosphatase (89 aa).

In terms of domain architecture, Acylphosphatase-like spans 3-89 (RFTARVAGLV…QSDLTDFRRK (87 aa)). Catalysis depends on residues Arg-18 and Asn-36.

It belongs to the acylphosphatase family.

The enzyme catalyses an acyl phosphate + H2O = a carboxylate + phosphate + H(+). The polypeptide is Acylphosphatase (acyP) (Frankia casuarinae (strain DSM 45818 / CECT 9043 / HFP020203 / CcI3)).